The sequence spans 197 residues: Endo-1,4-beta-xylanase A (197 aa).

Residues 1 to 197 (SGTPSSTGTD…SSGTATITVT (197 aa)) enclose the GH11 domain. The active-site Nucleophile is the glutamate 87. Cysteines 111 and 160 form a disulfide. The active-site Proton donor is the glutamate 184.

Belongs to the glycosyl hydrolase 11 (cellulase G) family.

It is found in the secreted. The enzyme catalyses Endohydrolysis of (1-&gt;4)-beta-D-xylosidic linkages in xylans.. Its pathway is glycan degradation; xylan degradation. In terms of biological role, hydrolyzes xylans into xylobiose and xylose. The chain is Endo-1,4-beta-xylanase A (XYNA) from Schizophyllum commune (Split gill fungus).